The primary structure comprises 69 residues: Toxin CSTX-11 (69 aa).

4 disulfides stabilise this stretch: cysteine 6–cysteine 21, cysteine 13–cysteine 30, cysteine 20–cysteine 47, and cysteine 32–cysteine 45.

As to expression, expressed by the venom gland.

The protein localises to the secreted. It localises to the target cell membrane. In terms of biological role, spider venom toxin that shows calcium channel blocking activity and exhibits cytolytic activity by affecting the outer leaflet curvature and/or pore formation across the membrane. It blocks L-type calcium channels (Cav1/CACNA1) in mammalian neurons at nanomolar concentrations. Furthermore, it produces a slow voltage-independent block of mid/low and high voltage-activated calcium channels in cockroach neurons. Potassium ions, histamine, M-ctenitoxin-Cs1a (AC P83619), CSTX-9 (AC P58604), and CSTX-13 (AC P83919) synergistically increase the insecticidal activity of this toxin. In vivo, it causes paralysis in blow flies and provokes death in drosophila. The sequence is that of Toxin CSTX-11 from Cupiennius salei (American wandering spider).